The chain runs to 136 residues: Interleukin-13 (136 aa).

The first 18 residues, M1–A18, serve as a signal peptide directing secretion. 6 N-linked (GlcNAc...) asparagine glycosylation sites follow: N38, N49, N57, N72, N75, and N131. Cystine bridges form between C48-C76 and C64-C90.

This sequence belongs to the IL-4/IL-13 family. As to quaternary structure, interacts with IL13RA2.

The protein localises to the secreted. Cytokine that plays important roles in allergic inflammation and immune response to parasite infection. Synergizes with IL2 in regulating interferon-gamma synthesis. Stimulates B-cell proliferation, and activation of eosinophils, basophils, and mast cells. Plays an important role in controlling IL33 activity by modulating the production of transmembrane and soluble forms of interleukin-1 receptor-like 1/IL1RL1. Displays the capacity to antagonize Th1-driven proinflammatory immune response and downregulates synthesis of many proinflammatory cytokines including IL1, IL6, IL10, IL12 and TNF-alpha through a mechanism that partially involves suppression of NF-kappa-B. Also functions on nonhematopoietic cells, including endothelial cells where it induces vascular cell adhesion protein 1/VCAM1, which is important in the recruitment of eosinophils. Exerts its biological effects through its receptors which comprises the IL4R chain and the IL13RA1 chain, to activate JAK1 and TYK2, leading to the activation of STAT6. Aside from IL13RA1, another receptor IL13RA2 acts as a high affinity decoy for IL13 and mediates internalization and depletion of extracellular IL13. The chain is Interleukin-13 (IL13) from Camelus bactrianus (Bactrian camel).